Here is a 149-residue protein sequence, read N- to C-terminus: Ribonuclease pancreatic (149 aa).

An N-terminal signal peptide occupies residues 1–25; sequence MGLEKSLILFPLLVLVLGWVQPSLA. Substrate contacts are provided by K32 and R35. The active-site Proton acceptor is H37. 4 disulfide bridges follow: C51–C109, C65–C120, C83–C135, and C90–C97. Residues 66-70, K91, and R110 each bind substrate; that span reads KPVNT. Residue H144 is the Proton donor of the active site.

The protein belongs to the pancreatic ribonuclease family. In terms of assembly, monomer. Interacts with and forms tight 1:1 complexes with RNH1. Dimerization of two such complexes may occur. Interaction with RNH1 inhibits this protein. In terms of tissue distribution, pancreas.

The protein resides in the secreted. The enzyme catalyses an [RNA] containing cytidine + H2O = an [RNA]-3'-cytidine-3'-phosphate + a 5'-hydroxy-ribonucleotide-3'-[RNA].. The catalysed reaction is an [RNA] containing uridine + H2O = an [RNA]-3'-uridine-3'-phosphate + a 5'-hydroxy-ribonucleotide-3'-[RNA].. Functionally, endonuclease that catalyzes the cleavage of RNA on the 3' side of pyrimidine nucleotides. Acts on single-stranded and double-stranded RNA. The sequence is that of Ribonuclease pancreatic (RNASE1) from Uranomys ruddi (White-bellied brush-furred rat).